Consider the following 215-residue polypeptide: uncharacterized protein (215 aa).

Residues serine 114, aspartate 162, and histidine 194 each act as charge relay system in the active site.

The protein belongs to the AB hydrolase superfamily. AB hydrolase 2 family.

This is an uncharacterized protein from Rickettsia prowazekii (strain Madrid E).